The sequence spans 695 residues: Elongation factor G 2 (695 aa).

The tr-type G domain occupies 5-280; the sequence is SKYRNIGIFA…AVVDYLPSPT (276 aa). GTP-binding positions include 14–21, 78–82, and 132–135; these read AHVDAGKT, DTPGH, and NKLD.

This sequence belongs to the TRAFAC class translation factor GTPase superfamily. Classic translation factor GTPase family. EF-G/EF-2 subfamily.

The protein localises to the cytoplasm. Catalyzes the GTP-dependent ribosomal translocation step during translation elongation. During this step, the ribosome changes from the pre-translocational (PRE) to the post-translocational (POST) state as the newly formed A-site-bound peptidyl-tRNA and P-site-bound deacylated tRNA move to the P and E sites, respectively. Catalyzes the coordinated movement of the two tRNA molecules, the mRNA and conformational changes in the ribosome. This chain is Elongation factor G 2, found in Photobacterium profundum (strain SS9).